A 411-amino-acid chain; its full sequence is NADH-quinone oxidoreductase subunit D 2 (411 aa).

It belongs to the complex I 49 kDa subunit family. As to quaternary structure, NDH-1 is composed of 14 different subunits. Subunits NuoB, C, D, E, F, and G constitute the peripheral sector of the complex.

It is found in the cell membrane. The enzyme catalyses a quinone + NADH + 5 H(+)(in) = a quinol + NAD(+) + 4 H(+)(out). In terms of biological role, NDH-1 shuttles electrons from NADH, via FMN and iron-sulfur (Fe-S) centers, to quinones in the respiratory chain. The immediate electron acceptor for the enzyme in this species is believed to be ubiquinone. Couples the redox reaction to proton translocation (for every two electrons transferred, four hydrogen ions are translocated across the cytoplasmic membrane), and thus conserves the redox energy in a proton gradient. The sequence is that of NADH-quinone oxidoreductase subunit D 2 from Chloroflexus aurantiacus (strain ATCC 29366 / DSM 635 / J-10-fl).